A 440-amino-acid polypeptide reads, in one-letter code: C4-dicarboxylate transport protein (440 aa).

Transmembrane regions (helical) follow at residues 15–35, 46–66, 78–98, 146–166, 190–210, 224–244, 291–311, 332–352, and 354–374; these read VLVAITIGILLGHYYPETGVA, LIKMVIAPIIFCTVVSGIAGM, YALLYFEIVSTIALIIGLVVV, AFANGDILQVLMFSVLFGFAL, IINMIMKLAPIGAFGAMAFTI, LMACFYITCLLFVLVVLGGIC, VVGLVIPTGYSFNLDGTSIYL, ITLLLVLLVASKGAAGVTGSG, and IVLAATLSAVGHLPVAGLALI. The segment at 420 to 440 is disordered; it reads GAPLVDTRPTDDLGVAEGPAR.

It belongs to the dicarboxylate/amino acid:cation symporter (DAACS) (TC 2.A.23) family.

It localises to the cell inner membrane. Responsible for the transport of dicarboxylates such as succinate, fumarate, and malate from the periplasm across the membrane. The protein is C4-dicarboxylate transport protein of Pseudomonas putida (strain ATCC 700007 / DSM 6899 / JCM 31910 / BCRC 17059 / LMG 24140 / F1).